The following is a 106-amino-acid chain: Large ribosomal subunit protein eL42 (106 aa).

This sequence belongs to the eukaryotic ribosomal protein eL42 family.

The polypeptide is Large ribosomal subunit protein eL42 (RPL44) (Meyerozyma guilliermondii (strain ATCC 6260 / CBS 566 / DSM 6381 / JCM 1539 / NBRC 10279 / NRRL Y-324) (Yeast)).